Consider the following 86-residue polypeptide: Putative defensin-like protein 211 (86 aa).

An N-terminal signal peptide occupies residues 1-19 (MNTIVLFLTLLILVSSCTS). 3 disulfide bridges follow: Cys55-Cys72, Cys58-Cys77, and Cys62-Cys79.

This sequence belongs to the DEFL family.

The protein resides in the secreted. The protein is Putative defensin-like protein 211 of Arabidopsis thaliana (Mouse-ear cress).